A 275-amino-acid polypeptide reads, in one-letter code: Tumor necrosis factor-inducible gene 6 protein (275 aa).

The N-terminal stretch at 1–17 (MVVLLCLCVLLWEEAHG) is a signal peptide. Residues 36–129 (GVYHREARAG…SERWDAYCYN (94 aa)) enclose the Link domain. 3 cysteine pairs are disulfide-bonded: Cys58-Cys127, Cys82-Cys103, and Cys135-Cys161. N-linked (GlcNAc...) asparagine glycosylation is present at Asn118. The 113-residue stretch at 135–247 (CGGVFTDPKR…GGFQIKYVTV (113 aa)) folds into the CUB domain. Positions 183, 191, 232, 234, and 235 each coordinate Ca(2+). An intrachain disulfide couples Cys188 to Cys210. The segment covering 253–264 (SSQAKNTSTTGN) has biased composition (polar residues). Residues 253–275 (SSQAKNTSTTGNKKFLPGRFSHL) are disordered. The N-linked (GlcNAc...) asparagine glycan is linked to Asn258.

In terms of assembly, interacts (via Link domain) with inter-alpha-inhibitor (I-alpha-I) component bikunin. Interacts with ITIH2/HC2; this interaction is required for transesterification of the HC to hyaluronan. Interacts (via Link and CUB domains) with ITIH1. Chondroitin sulfate may be required for the stability of the complex. Interacts (via Link domain) with various C-X-C and C-C chemokines including PF4, CXCL8, CXCL11, CXCL12, CCL2, CCL7, CCL19, CCL21, and CCL27; this interaction interferes with chemokine binding to glycosaminoglycans. Interacts (primarily via Link domain) with BMP2; this interaction is inhibited by hyaluronan. Interacts (via both Link and CUB domains) with TNFSF11. Interacts (via CUB domain) with FN1 (via type III repeats 9-14); this interaction enhances fibronectin fibril assembly. TNFAIP6 may act as a bridging molecule between FN1 and THBS1. Expressed in epiphyseal and metaphyseal bone marrow of both the femur and tibia (at protein level).

The protein localises to the secreted. Its function is as follows. Major regulator of extracellular matrix organization during tissue remodeling. Catalyzes the transfer of a heavy chain (HC) from inter-alpha-inhibitor (I-alpha-I) complex to hyaluronan. Cleaves the ester bond between the C-terminus of the HC and GalNAc residue of the chondroitin sulfate chain in I-alpha-I complex followed by transesterification of the HC to hyaluronan. In the process, potentiates the antiprotease function of I-alpha-I complex through release of free bikunin. Acts as a catalyst in the formation of hyaluronan-HC oligomers and hyaluronan-rich matrix surrounding the cumulus cell-oocyte complex, a necessary step for oocyte fertilization. Assembles hyaluronan in pericellular matrices that serve as platforms for receptor clustering and signaling. Enables binding of hyaluronan deposited on the surface of macrophages to LYVE1 on lymphatic endothelium and facilitates macrophage extravasation. Alters hyaluronan binding to functionally latent CD44 on vascular endothelium, switching CD44 into an active state that supports leukocyte rolling. Modulates the interaction of chemokines with extracellular matrix components and proteoglycans on endothelial cell surface, likely preventing chemokine gradient formation. In a negative feedback mechanism, may limit excessive neutrophil recruitment at inflammatory sites by antagonizing the association of CXCL8 with glycosaminoglycans on vascular endothelium. Has a role in osteogenesis and bone remodeling. Inhibits BMP2-dependent differentiation of mesenchymal stem cell to osteoblasts. Protects against bone erosion during inflammation by inhibiting TNFSF11/RANKL-dependent osteoclast activation. The sequence is that of Tumor necrosis factor-inducible gene 6 protein (Tnfaip6) from Mus musculus (Mouse).